The following is a 455-amino-acid chain: GTPase Der (455 aa).

2 EngA-type G domains span residues 4 to 169 (PIVA…PPKH) and 178 to 353 (IQMA…EQHR). Residues 10-17 (GRPNVGKS), 57-61 (DTGGL), 120-123 (NKCE), 184-191 (GRPNVGKS), 231-235 (DTAGI), and 296-299 (NKWD) each bind GTP. One can recognise a KH-like domain in the interval 354–439 (RRVSTSVVNE…PLKLFWRGKQ (86 aa)).

The protein belongs to the TRAFAC class TrmE-Era-EngA-EngB-Septin-like GTPase superfamily. EngA (Der) GTPase family. In terms of assembly, associates with the 50S ribosomal subunit.

Its function is as follows. GTPase that plays an essential role in the late steps of ribosome biogenesis. This is GTPase Der from Prochlorococcus marinus (strain MIT 9313).